The primary structure comprises 223 residues: Large ribosomal subunit protein uL4 (223 aa).

The segment at 47–72 (GTASTKTRGEVAGGGRKPWPQKHTGR) is disordered.

This sequence belongs to the universal ribosomal protein uL4 family. As to quaternary structure, part of the 50S ribosomal subunit.

Functionally, one of the primary rRNA binding proteins, this protein initially binds near the 5'-end of the 23S rRNA. It is important during the early stages of 50S assembly. It makes multiple contacts with different domains of the 23S rRNA in the assembled 50S subunit and ribosome. Its function is as follows. Forms part of the polypeptide exit tunnel. The polypeptide is Large ribosomal subunit protein uL4 (Fervidobacterium nodosum (strain ATCC 35602 / DSM 5306 / Rt17-B1)).